Here is a 153-residue protein sequence, read N- to C-terminus: Aspartate carbamoyltransferase regulatory chain (153 aa).

Residues Cys109, Cys114, Cys138, and Cys141 each coordinate Zn(2+).

It belongs to the PyrI family. In terms of assembly, contains catalytic and regulatory chains. Zn(2+) serves as cofactor.

Involved in allosteric regulation of aspartate carbamoyltransferase. This Salmonella arizonae (strain ATCC BAA-731 / CDC346-86 / RSK2980) protein is Aspartate carbamoyltransferase regulatory chain.